We begin with the raw amino-acid sequence, 447 residues long: Serine/threonine-protein phosphatase 2A 55 kDa regulatory subunit B delta isoform (447 aa).

WD repeat units follow at residues 26–65, 91–132, 175–213, 224–264, 283–321, 338–379, and 414–447; these read AEADIISTVEFNCSGELLATGDKGGRVVIFQREQENKSRP, EIEE…KRVE, AHTYHINSISVNSDHQTYLSADDLRVNLWHLEITDRSFN, ELTE…LCDR, EIISSISDVKFSHSGRYMMTRDYLSVKVWDLNMESRPVE, ENDC…DITL, and DFNKKILHTAWHPTDNIIAVAATNNLYIFQDKVN.

It belongs to the phosphatase 2A regulatory subunit B family. In terms of assembly, PP2A consists of a common heterodimeric core enzyme, composed of a 36 kDa catalytic subunit (subunit C) and a 65 kDa constant regulatory subunit (PR65 or subunit A), that associates with a variety of regulatory subunits. Proteins that associate with the core dimer include three families of regulatory subunits B (the R2/B/PR55/B55, R3/B''/PR72/PR130/PR59 and R5/B'/B56 families), the 48 kDa variable regulatory subunit, viral proteins, and cell signaling molecules. Interacts with ensa (when phosphorylated at 'Ser-67') and arpp19 (when phosphorylated at 'Ser-67'), leading to inhibit PP2A activity.

Its subcellular location is the cytoplasm. Its function is as follows. Substrate-recognition subunit of protein phosphatase 2A (PP2A) that plays a key role in cell cycle by controlling mitosis entry and exit. The activity of PP2A complexes containing ppp2r2d (PR55-delta) fluctuate during the cell cycle: the activity is high in interphase and low in mitosis. During mitosis, activity of PP2A is inhibited via interaction with phosphorylated ensa and arpp19 inhibitors. PP2A complexes containing ppp2r2d (PR55-delta) also regulate the activity of TGF-beta/Activin/Nodal signaling by restricting receptor activity. Within the PP2A complexes, the B regulatory subunits modulate substrate selectivity and catalytic activity, and may also direct the localization of the catalytic enzyme to a particular subcellular compartment. The chain is Serine/threonine-protein phosphatase 2A 55 kDa regulatory subunit B delta isoform (ppp2r2d) from Xenopus laevis (African clawed frog).